Here is a 199-residue protein sequence, read N- to C-terminus: Recombination protein RecR (199 aa).

The segment at 57 to 72 adopts a C4-type zinc-finger fold; that stretch reads CQKCRTFTEQSLCPIC. In terms of domain architecture, Toprim spans 81-176; the sequence is DTLCVVETPA…AVSRIAHGVP (96 aa).

This sequence belongs to the RecR family.

May play a role in DNA repair. It seems to be involved in an RecBC-independent recombinational process of DNA repair. It may act with RecF and RecO. This is Recombination protein RecR from Shewanella amazonensis (strain ATCC BAA-1098 / SB2B).